Reading from the N-terminus, the 321-residue chain is uncharacterized protein (321 aa).

Tyr-49 functions as the Proton donor in the catalytic mechanism. Residue His-106 coordinates substrate.

This sequence belongs to the aldo/keto reductase family.

This is an uncharacterized protein from Caenorhabditis elegans.